The chain runs to 132 residues: Small ribosomal subunit protein uS8 (132 aa).

This sequence belongs to the universal ribosomal protein uS8 family. Part of the 30S ribosomal subunit. Contacts proteins S5 and S12.

Its function is as follows. One of the primary rRNA binding proteins, it binds directly to 16S rRNA central domain where it helps coordinate assembly of the platform of the 30S subunit. The sequence is that of Small ribosomal subunit protein uS8 from Clostridium acetobutylicum (strain ATCC 824 / DSM 792 / JCM 1419 / IAM 19013 / LMG 5710 / NBRC 13948 / NRRL B-527 / VKM B-1787 / 2291 / W).